We begin with the raw amino-acid sequence, 296 residues long: Acetylglutamate kinase (296 aa).

Residues 68 to 69 (GG), Arg90, and Asn193 contribute to the substrate site.

It belongs to the acetylglutamate kinase family. ArgB subfamily.

It is found in the cytoplasm. It carries out the reaction N-acetyl-L-glutamate + ATP = N-acetyl-L-glutamyl 5-phosphate + ADP. It participates in amino-acid biosynthesis; L-arginine biosynthesis; N(2)-acetyl-L-ornithine from L-glutamate: step 2/4. In terms of biological role, catalyzes the ATP-dependent phosphorylation of N-acetyl-L-glutamate. This is Acetylglutamate kinase from Acidothermus cellulolyticus (strain ATCC 43068 / DSM 8971 / 11B).